We begin with the raw amino-acid sequence, 522 residues long: MSLLNCENSCGSSQSESDCCVAMASSCSAVTKDDSVGGTASTGNLSSSFMEEIQGYDVEFDPPLESKYECPICLMALREAVQTPCGHRFCKACIIKSIRDAGHKCPVDNEILLENQLFPDNFAKREILSLMVKCPNEGCLHKMELRHLEDHQAHCEFALMDCPQCQRPFQKFHINIHILKDCPRRQVSCDNCAASMAFEDKEIHDQNCPLANVICEYCNTILIREQMPNHYDLDCPTAPIPCTFSTFGCHEKMQRNHLARHLQENTQSHMRMLAQAVHSLSVIPDSGYISEVRNFQETIHQLEGRLVRQDHQIRELTAKMETQSMYVSELKRTIRTLEDKVAEIEAQQCNGIYIWKIGNFGMHLKCQEEEKPVVIHSPGFYTGKPGYKLCMRLHLQLPTAQRCANYISLFVHTMQGEYDSHLPWPFQGTIRLTILDQSEAPVRQNHEEIMDAKPELLAFQRPTIPRNPKGFGYVTFMHLEALRQRTFIKDDTLLVRCEVSTRFDMGSLRREGFQPRSTDAGV.

The segment at 1–354 is interaction with TAX1BP1; it reads MSLLNCENSC…EAQQCNGIYI (354 aa). Residues 70 to 109 form an RING-type zinc finger; sequence CPICLMALREAVQTPCGHRFCKACIIKSIRDAGHKCPVDN. K124 is covalently cross-linked (Glycyl lysine isopeptide (Lys-Gly) (interchain with G-Cter in SUMO); alternate). A Glycyl lysine isopeptide (Lys-Gly) (interchain with G-Cter in ubiquitin); alternate cross-link involves residue K124. Residue K142 forms a Glycyl lysine isopeptide (Lys-Gly) (interchain with G-Cter in SUMO) linkage. 2 TRAF-type zinc fingers span residues 150–202 and 203–259; these read DHQA…EDKE and IHDQ…NHLA. Positions 288 to 348 form a coiled coil; that stretch reads YISEVRNFQE…DKVAEIEAQQ (61 aa). Residue K319 forms a Glycyl lysine isopeptide (Lys-Gly) (interchain with G-Cter in ubiquitin) linkage. The region spanning 350-499 is the MATH domain; that stretch reads NGIYIWKIGN…DDTLLVRCEV (150 aa). The interval 355 to 522 is interaction with TANK; that stretch reads WKIGNFGMHL…FQPRSTDAGV (168 aa). A Glycyl lysine isopeptide (Lys-Gly) (interchain with G-Cter in SUMO) cross-link involves residue K453.

The protein belongs to the TNF receptor-associated factor family. A subfamily. In terms of assembly, homotrimer. Homooligomer. N-terminal region is dimeric while C-terminal region is trimeric; maybe providing a mode of oligomerization. Upon IL1B treatment, forms a complex with PELI1, IRAK1, IRAK4 and MYD88; this complex recruits MAP3K7/TAK1, TAB1 and TAB2 to mediate NF-kappa-B activation. Direct binding of SMAD6 to PELI1 prevents the complex formation and hence negatively regulates IL1R-TLR signaling and eventually NF-kappa-B-mediated gene expression. Binds to TNFRSF5/CD40 and TNFRSF11A/RANK. Associates with NGFR, TNFRSF17, IRAK2, IRAK3, RIPK2, MAP3K1, MAP3K5, MAP3K14, CSK, TRAF, TRAF-interacting protein TRIP and TNF receptor associated protein TDP2. Interacts with IL17R. Interacts with SQSTM1 bridging NTRK1 and NGFR. Forms a ternary complex with SQSTM1 and PRKCZ. Interacts with PELI2 and PELI3. Binds UBE2V1. Interacts with TAX1BP1; this interaction mediates deubiquitination of TRAF6 and inhibition of NF-kappa-B activation. Interacts with ZNF675. Interacts with ARRB1 and ARRB2. Interacts with MAP3K7 and TAB1/MAP3K7IP1; during IL-1 signaling. Interacts with UBE2N. Interacts with TGFBR1, HDAC1 and RANGAP1. Interacts with AKT1, AKT2 and AKT3. Interacts (via TRAF domains) with NUMBL (via C-terminal). Interacts with RBCK1. Interacts with LIMD1 (via LIM domains). Interacts with RSAD2/viperin. Interacts (via C-terminus) with EIF2AK2/PKR (via the kinase catalytic domain). Interacts with ZFAND5. Interacts with IL1RL1. Interacts with TRAFD1. Interacts with AJUBA. Interacts with MAVS/IPS1. Interacts (via TRAF domains) with DYNC2I2 (via WD domains). Interacts with IFIT3 (via N-terminus). Interacts with TICAM2. Interacts with CARD14. Interacts with CD40 and MAP3K8; the interaction is required for ERK activation. Interacts with TICAM1 and this interaction is enhanced in the presence of WDFY1. Interacts with TANK; this interaction increases in response to DNA damage. Interacts with USP10; this interaction increases in response to DNA damage. Interacts with ZC3H12A; this interaction increases in response to DNA damage and is stimulated by TANK. Interacts with WDFY3. Interacts with TRIM13. Interacts with GPS2. Interacts (via C-terminus) with SASH1. Interacts with LRRC19. Interacts with IL17RA and TRAF3IP2. Interacts with TOMM70. Interacts with AMBRA1; interaction is required to mediate 'Lys-63'-linked ubiquitination of ULK1. Interacts with CRBN; this interaction inhibits TLR4-mediated signaling by preventing TRAF6-mediated ubiquitination of ECSIT. In terms of processing, sumoylated on Lys-124, Lys-142 and Lys-453 with SUMO1. Polyubiquitinated on Lys-124 by TRAF3IP2; after cell stimulation with IL17A. Polyubiquitinated on Lys-124; after cell stimulation with IL1B or TGFB. This ligand-induced cell stimulation leads to dimerization/oligomerization of TRAF6 molecules, followed by auto-ubiquitination which involves UBE2N and UBE2V1 and leads to TRAF6 activation. This 'Lys-63' site-specific poly-ubiquitination appears to be associated with the activation of signaling molecules. Endogenous autoubiquitination occurs only for the cytoplasmic form. Deubiquitinated by USP10 in a TANK-dependent manner, leading to the negative regulation of NF-kappaB signaling upon DNA damage. LRRC19 induces 'Lys-63' ubiquitination. Ubiquitinated at Lys-319 by the SCF(FBXL2) complex, leading to its degradation by the proteasome. Post-translationally, (Microbial infection) Deubiquitinated by Epstein-Barr virus BPLF1 on both 'Lys-48' and 'Lys-63'-linked ubiquitin chains; leading to NF-kappa-B signaling inhibition. As to expression, expressed in heart, brain, placenta, lung, liver, skeletal muscle, kidney and pancreas.

Its subcellular location is the cytoplasm. It is found in the cell cortex. The protein localises to the nucleus. It localises to the lipid droplet. The enzyme catalyses S-ubiquitinyl-[E2 ubiquitin-conjugating enzyme]-L-cysteine + [acceptor protein]-L-lysine = [E2 ubiquitin-conjugating enzyme]-L-cysteine + N(6)-ubiquitinyl-[acceptor protein]-L-lysine.. It participates in protein modification; protein ubiquitination. E3 ubiquitin ligase that, together with UBE2N and UBE2V1, mediates the synthesis of 'Lys-63'-linked-polyubiquitin chains conjugated to proteins, such as ECSIT, IKBKG, IRAK1, AKT1 and AKT2. Also mediates ubiquitination of free/unanchored polyubiquitin chain that leads to MAP3K7 activation. Leads to the activation of NF-kappa-B and JUN. Seems to also play a role in dendritic cells (DCs) maturation and/or activation. Represses c-Myb-mediated transactivation, in B-lymphocytes. Adapter protein that seems to play a role in signal transduction initiated via TNF receptor, IL-1 receptor and IL-17 receptor. Regulates osteoclast differentiation by mediating the activation of adapter protein complex 1 (AP-1) and NF-kappa-B, in response to RANK-L stimulation. Together with MAP3K8, mediates CD40 signals that activate ERK in B-cells and macrophages, and thus may play a role in the regulation of immunoglobulin production. Acts as a regulator of the JNK and NF-kappa-B signaling pathways by initiating assembly of heterotypic 'Lys-63'-/'Lys-48'-linked branched ubiquitin chains that are then recognized by TAB2: TRAF6 catalyzes initial 'Lys-63'-linked-polyubiquitin chains that are then branched via 'Lys-48'-linked polyubiquitin by HUWE1. 'Lys-63'-/'Lys-48'-linked branched ubiquitin chains protect 'Lys-63'-linkages from CYLD deubiquitination. Participates also in the TCR signaling by ubiquitinating LAT. The chain is TNF receptor-associated factor 6 (TRAF6) from Homo sapiens (Human).